The sequence spans 525 residues: Cytochrome P450 714A2 (525 aa).

Residues 1 to 3 (MES) lie on the Lumenal side of the membrane. The helical; Signal-anchor for type III membrane protein transmembrane segment at 4 to 24 (LVVHTVNAIWCIVIVGIFSVG) threads the bilayer. Residues 25-525 (YHVYGRAVVE…PQHGVVIRVV (501 aa)) are Cytoplasmic-facing. Cysteine 475 provides a ligand contact to heme.

Belongs to the cytochrome P450 family. It depends on heme as a cofactor. In terms of tissue distribution, expressed in the shoot apical meristem (SAM) and petioles of young leaves, in the leaf margin and petiole vein of cotyledons, and at low levels in the filaments of developing flowers. Not detected in siliques.

Its subcellular location is the endoplasmic reticulum membrane. Involved in the inactivation of early gibberellin (GA) intermediates. The sequence is that of Cytochrome P450 714A2 (CYP714A2) from Arabidopsis thaliana (Mouse-ear cress).